The primary structure comprises 451 residues: Adenylyltransferase and sulfurtransferase MOCS3 (451 aa).

Thr-60 is modified (phosphothreonine). Residues Gly-99, Asp-120, 127-131 (SNFHR), Lys-144, and 188-189 (DN) contribute to the ATP site. Zn(2+)-binding residues include Cys-229 and Cys-232. Cys-246 functions as the Glycyl thioester intermediate; for adenylyltransferase activity in the catalytic mechanism. Cys-304 and Cys-307 together coordinate Zn(2+). The 97-residue stretch at 353–449 (QQQPHLLIDV…WTHKVDPSFP (97 aa)) folds into the Rhodanese domain. The active-site Cysteine persulfide intermediate; for sulfurtransferase activity is Cys-408.

The protein in the N-terminal section; belongs to the HesA/MoeB/ThiF family. UBA4 subfamily. Zn(2+) serves as cofactor.

It localises to the cytoplasm. The protein resides in the cytosol. The catalysed reaction is [molybdopterin-synthase sulfur-carrier protein]-C-terminal Gly-Gly + ATP + H(+) = [molybdopterin-synthase sulfur-carrier protein]-C-terminal Gly-Gly-AMP + diphosphate. It catalyses the reaction [molybdopterin-synthase sulfur-carrier protein]-C-terminal Gly-Gly-AMP + S-sulfanyl-L-cysteinyl-[cysteine desulfurase] + AH2 = [molybdopterin-synthase sulfur-carrier protein]-C-terminal-Gly-aminoethanethioate + L-cysteinyl-[cysteine desulfurase] + A + AMP + 2 H(+). Its pathway is tRNA modification; 5-methoxycarbonylmethyl-2-thiouridine-tRNA biosynthesis. It functions in the pathway cofactor biosynthesis; molybdopterin biosynthesis. Functionally, plays a central role in 2-thiolation of mcm(5)S(2)U at tRNA wobble positions of cytosolic tRNA(Lys), tRNA(Glu) and tRNA(Gln). Also essential during biosynthesis of the molybdenum cofactor. Acts by mediating the C-terminal thiocarboxylation of sulfur carriers URM1 and MOCS2A. Its N-terminus first activates URM1 and MOCS2A as acyl-adenylates (-COAMP), then the persulfide sulfur on the catalytic cysteine is transferred to URM1 and MOCS2A to form thiocarboxylation (-COSH) of their C-terminus. The reaction probably involves hydrogen sulfide that is generated from the persulfide intermediate and that acts as a nucleophile towards URM1 and MOCS2A. Subsequently, a transient disulfide bond is formed. Does not use thiosulfate as sulfur donor; NFS1 probably acting as a sulfur donor for thiocarboxylation reactions. This is Adenylyltransferase and sulfurtransferase MOCS3 from Drosophila ananassae (Fruit fly).